Consider the following 422-residue polypeptide: Probable glycosidase CRR1 (422 aa).

Positions 1-20 (MRISILQLVPVVGYIGFALG) are cleaved as a signal peptide. A GH16 domain is found at 67-339 (DEESCAPIPA…WENSPDIIEK (273 aa)). Glu-217 functions as the Nucleophile in the catalytic mechanism. Residue Glu-221 is the Proton donor of the active site.

This sequence belongs to the glycosyl hydrolase 16 family. CRR1 subfamily.

It is found in the spore wall. In terms of biological role, spore specific glycosidase involved in spore wall assembly during sporulation. May be involved in copper import. This chain is Probable glycosidase CRR1 (CRR1), found in Saccharomyces cerevisiae (strain ATCC 204508 / S288c) (Baker's yeast).